A 270-amino-acid chain; its full sequence is Undecaprenyl-diphosphatase (270 aa).

Transmembrane regions (helical) follow at residues 3–23 (TIVT…LPVS), 42–62 (WAMF…VQYW), 86–106 (LLAA…YIDV), 108–128 (LGSP…ILVI), 184–204 (AEFS…LELL), 217–237 (VGWS…LAVI), and 249–269 (FKPF…WLAM).

This sequence belongs to the UppP family.

The protein resides in the cell inner membrane. The catalysed reaction is di-trans,octa-cis-undecaprenyl diphosphate + H2O = di-trans,octa-cis-undecaprenyl phosphate + phosphate + H(+). Its function is as follows. Catalyzes the dephosphorylation of undecaprenyl diphosphate (UPP). Confers resistance to bacitracin. The sequence is that of Undecaprenyl-diphosphatase from Novosphingobium aromaticivorans (strain ATCC 700278 / DSM 12444 / CCUG 56034 / CIP 105152 / NBRC 16084 / F199).